A 159-amino-acid polypeptide reads, in one-letter code: Ankyrin repeat domain-containing protein 37 (159 aa).

ANK repeat units follow at residues 1-25 (MLLL…SVNA), 30-59 (QEQS…DLNQ), and 63-92 (LGET…QIGV). The short motif at 130–150 (EQQERDPRAPVLRQKRSFRTV) is the Nuclear localization signal element.

In terms of processing, ubiquitinated by the CRL2(FEM1B) complex, leading to its degradation. Expressed testis, ovary, uterus, kidney, liver, but not in other tissues.

The protein resides in the nucleus. It is found in the cytoplasm. This Mus musculus (Mouse) protein is Ankyrin repeat domain-containing protein 37.